Here is a 227-residue protein sequence, read N- to C-terminus: Cytochrome c oxidase subunit 2 (227 aa).

Residues 1-14 lie on the Mitochondrial intermembrane side of the membrane; the sequence is MAYPLQLGFQDATS. Residues 15 to 45 form a helical membrane-spanning segment; the sequence is PVMEELLHFHDHTLMIIFLISSLVLYIIMLM. Residues 46–59 lie on the Mitochondrial matrix side of the membrane; the sequence is LTTKLVHTNMMNVQ. A helical membrane pass occupies residues 60 to 87; that stretch reads EMEMIWTILPAIILILIALPSLHTLYMM. Residues 88 to 227 lie on the Mitochondrial intermembrane side of the membrane; sequence DEINNPLLTI…YFESWSASLA (140 aa). Cu cation is bound by residues H161, C196, E198, C200, H204, and M207. Residue E198 participates in Mg(2+) binding. Y218 carries the phosphotyrosine modification.

It belongs to the cytochrome c oxidase subunit 2 family. In terms of assembly, component of the cytochrome c oxidase (complex IV, CIV), a multisubunit enzyme composed of 14 subunits. The complex is composed of a catalytic core of 3 subunits MT-CO1, MT-CO2 and MT-CO3, encoded in the mitochondrial DNA, and 11 supernumerary subunits COX4I, COX5A, COX5B, COX6A, COX6B, COX6C, COX7A, COX7B, COX7C, COX8 and NDUFA4, which are encoded in the nuclear genome. The complex exists as a monomer or a dimer and forms supercomplexes (SCs) in the inner mitochondrial membrane with NADH-ubiquinone oxidoreductase (complex I, CI) and ubiquinol-cytochrome c oxidoreductase (cytochrome b-c1 complex, complex III, CIII), resulting in different assemblies (supercomplex SCI(1)III(2)IV(1) and megacomplex MCI(2)III(2)IV(2)). Found in a complex with TMEM177, COA6, COX18, COX20, SCO1 and SCO2. Interacts with TMEM177 in a COX20-dependent manner. Interacts with COX20. Interacts with COX16. Cu cation serves as cofactor.

It is found in the mitochondrion inner membrane. The enzyme catalyses 4 Fe(II)-[cytochrome c] + O2 + 8 H(+)(in) = 4 Fe(III)-[cytochrome c] + 2 H2O + 4 H(+)(out). Its function is as follows. Component of the cytochrome c oxidase, the last enzyme in the mitochondrial electron transport chain which drives oxidative phosphorylation. The respiratory chain contains 3 multisubunit complexes succinate dehydrogenase (complex II, CII), ubiquinol-cytochrome c oxidoreductase (cytochrome b-c1 complex, complex III, CIII) and cytochrome c oxidase (complex IV, CIV), that cooperate to transfer electrons derived from NADH and succinate to molecular oxygen, creating an electrochemical gradient over the inner membrane that drives transmembrane transport and the ATP synthase. Cytochrome c oxidase is the component of the respiratory chain that catalyzes the reduction of oxygen to water. Electrons originating from reduced cytochrome c in the intermembrane space (IMS) are transferred via the dinuclear copper A center (CU(A)) of subunit 2 and heme A of subunit 1 to the active site in subunit 1, a binuclear center (BNC) formed by heme A3 and copper B (CU(B)). The BNC reduces molecular oxygen to 2 water molecules using 4 electrons from cytochrome c in the IMS and 4 protons from the mitochondrial matrix. In Mammuthus primigenius (Siberian woolly mammoth), this protein is Cytochrome c oxidase subunit 2 (MT-CO2).